The sequence spans 423 residues: UPF0229 protein PLES_05841 (423 aa).

Residues 84 to 107 (AGEHIARPSGGGGGRGGGKASNSG) form a disordered region. Over residues 92–102 (SGGGGGRGGGK) the composition is skewed to gly residues.

It belongs to the UPF0229 family.

In Pseudomonas aeruginosa (strain LESB58), this protein is UPF0229 protein PLES_05841.